A 478-amino-acid polypeptide reads, in one-letter code: Cobyric acid synthase (478 aa).

Positions 250 to 437 (QLRVVVPVLP…VHGVFDHPMH (188 aa)) constitute a GATase cobBQ-type domain. Residue Cys331 is the Nucleophile of the active site. The active site involves His429.

This sequence belongs to the CobB/CobQ family. CobQ subfamily.

The protein operates within cofactor biosynthesis; adenosylcobalamin biosynthesis. Functionally, catalyzes amidations at positions B, D, E, and G on adenosylcobyrinic A,C-diamide. NH(2) groups are provided by glutamine, and one molecule of ATP is hydrogenolyzed for each amidation. In Xanthomonas euvesicatoria pv. vesicatoria (strain 85-10) (Xanthomonas campestris pv. vesicatoria), this protein is Cobyric acid synthase.